The following is a 219-amino-acid chain: Ras-related protein Rab-3B (219 aa).

An N-acetylalanine modification is found at Ala-2. Ser-31, Ser-32, Val-33, Gly-34, Lys-35, Thr-36, Ser-37, Pro-49, and Ser-53 together coordinate GTP. Mg(2+) is bound at residue Thr-36. The short motif at 45–58 (DTFTPAFVSTVGID) is the Switch 1 element. Mg(2+) is bound by residues Thr-54 and Asp-77. A Switch 2 motif is present at residues 78 to 96 (TAGQERYRTITTAYYRGAM). Gly-80 contributes to the GTP binding site. Position 86 is a phosphothreonine; by LRRK2 (Thr-86). Asn-135, Lys-136, Asp-138, Ala-166, and Lys-167 together coordinate GTP. Phosphoserine is present on residues Ser-188 and Ser-190. Residues Cys-217 and Cys-219 are each lipidated (S-geranylgeranyl cysteine). Cys-219 bears the Cysteine methyl ester mark.

It belongs to the small GTPase superfamily. Rab family. In terms of assembly, interacts with RIMS1, RIMS2, RPH3A and RPH3AL. The GTP-bound form interacts with GAS8/DRC4 (via coiled-coil domains). Interacts with GDI2, CHM and CHML; phosphorylation at Thr-86 disrupts these interactions. Interacts with MADD (via uDENN domain); the GTP-bound form is preferred for interaction. Mg(2+) serves as cofactor. Phosphorylation of Thr-86 in the switch II region by LRRK2 prevents the association of RAB regulatory proteins, including CHM, CHML and RAB GDP dissociation inhibitor GDI2. In terms of tissue distribution, abundantly expressed in testis, lung and brain.

Its subcellular location is the cell membrane. It localises to the golgi apparatus. The catalysed reaction is GTP + H2O = GDP + phosphate + H(+). Regulated by guanine nucleotide exchange factors (GEFs) which promote the exchange of bound GDP for free GTP. Regulated by GTPase activating proteins (GAPs) which increase the GTP hydrolysis activity. Inhibited by GDP dissociation inhibitors (GDIs) which prevent Rab-GDP dissociation. Functionally, the small GTPases Rab are key regulators of intracellular membrane trafficking, from the formation of transport vesicles to their fusion with membranes. Rabs cycle between an inactive GDP-bound form and an active GTP-bound form that is able to recruit to membranes different sets of downstream effectors directly responsible for vesicle formation, movement, tethering and fusion. This is Ras-related protein Rab-3B from Mus musculus (Mouse).